Consider the following 618-residue polypeptide: Transport protein particle subunit trs85-2 (618 aa).

This sequence belongs to the TRS85 family. As to quaternary structure, part of the multisubunit TRAPP (transport protein particle) complexes I and II.

The protein localises to the golgi apparatus. Its subcellular location is the cis-Golgi network. Functionally, component of the TRAPP I and TRAPP II complexes. TRAPP I plays a key role in the late stages of endoplasmic reticulum to Golgi traffic. TRAPP II seems to play a role in intra-Golgi transport. Has a role late in meiosis following DNA replication. The protein is Transport protein particle subunit trs85-2 (trs85-2) of Schizosaccharomyces pombe (strain 972 / ATCC 24843) (Fission yeast).